Reading from the N-terminus, the 208-residue chain is Regulator of Ty1 transposition protein 105 (208 aa).

The segment at 28 to 105 is disordered; that stretch reads GVSFDRSLTP…QRADQRSRLE (78 aa). Over residues 33-42 the composition is skewed to polar residues; the sequence is RSLTPQSLRT. Residues 60–71 are compositionally biased toward low complexity; sequence IDTSPSVVSDII. A compositionally biased stretch (basic and acidic residues) spans 94–105; sequence ERQRADQRSRLE.

It is found in the cytoplasm. Its subcellular location is the nucleus. Its function is as follows. Involved in regulation of Ty1 transposition. Inhibits Ty1 transposition at a post-transcriptional and pre-integrational stage of the Ty1 retrotransposition cycle. This is Regulator of Ty1 transposition protein 105 (RTT105) from Saccharomyces cerevisiae (strain YJM789) (Baker's yeast).